We begin with the raw amino-acid sequence, 135 residues long: Putative pre-16S rRNA nuclease (135 aa).

This sequence belongs to the YqgF nuclease family.

It is found in the cytoplasm. Functionally, could be a nuclease involved in processing of the 5'-end of pre-16S rRNA. This Maridesulfovibrio salexigens (strain ATCC 14822 / DSM 2638 / NCIMB 8403 / VKM B-1763) (Desulfovibrio salexigens) protein is Putative pre-16S rRNA nuclease.